We begin with the raw amino-acid sequence, 321 residues long: uncharacterized protein (321 aa).

The span at 1–12 (MQGGREVGRESV) shows a compositional bias: basic and acidic residues. The interval 1 to 85 (MQGGREVGRE…GWGEFEGFQE (85 aa)) is disordered. The segment covering 53–67 (NANSSRLDEGLSSSR) has biased composition (polar residues).

This is an uncharacterized protein from Rattus norvegicus (Rat).